We begin with the raw amino-acid sequence, 528 residues long: U3 small nucleolar RNA-associated protein 15 homolog (528 aa).

Residue Ala2 is modified to N-acetylalanine. WD repeat units follow at residues Lys36 to Thr75, Arg78 to Gln117, Gly120 to Thr159, Glu162 to Cys202, Glu204 to Val242, Asn246 to Ser285, and Asp287 to Ser326. Residue Lys249 forms a Glycyl lysine isopeptide (Lys-Gly) (interchain with G-Cter in SUMO2) linkage. The tract at residues Ala508 to Ser528 is disordered. Over residues Pro511–Ser528 the composition is skewed to basic and acidic residues.

Part of the small subunit (SSU) processome, composed of more than 70 proteins and the RNA chaperone small nucleolar RNA (snoRNA) U3. May be a component of the proposed t-UTP subcomplex of the ribosomal small subunit (SSU) processome containing at least UTP4, WDR43, HEATR1, UTP15, WDR75. Interacts directly with UTP4 and WDR43.

It is found in the nucleus. The protein resides in the nucleolus. Functionally, ribosome biogenesis factor. Involved in nucleolar processing of pre-18S ribosomal RNA. Required for optimal pre-ribosomal RNA transcription by RNA polymerase I. Part of the small subunit (SSU) processome, first precursor of the small eukaryotic ribosomal subunit. During the assembly of the SSU processome in the nucleolus, many ribosome biogenesis factors, an RNA chaperone and ribosomal proteins associate with the nascent pre-rRNA and work in concert to generate RNA folding, modifications, rearrangements and cleavage as well as targeted degradation of pre-ribosomal RNA by the RNA exosome. The chain is U3 small nucleolar RNA-associated protein 15 homolog from Rattus norvegicus (Rat).